Reading from the N-terminus, the 298-residue chain is MDQKQIEEIVRSVMASMGQDVPQPVAPSMQEGAKPQCAAPTVTESCALDLGSAEAKAWIGVENPHRADVLTELRRSTAARVCTGRAGPRPRTQALLRFLADHSRSKDTVLKEVPEEWVKAQGLLEVRSEISDKNLYLTRPDMGRRLSPEAIDALKSQCVMNPDVQVVVSDGLSTDAITANYEEILPPLLAGLKQAGLNVGTPFFVRYGRVKIEDQIGEILGAKVVILLVGERPGLGQSESLSCYAVYSPRVASTVEADRTCISNIHQGGTPPVEAAAVIVDLAKRMLEQKASGINMTR.

Val210, Glu231, and Cys261 together coordinate adenosylcob(III)alamin.

Belongs to the EutC family. In terms of assembly, the basic unit is a heterodimer which dimerizes to form tetramers. The heterotetramers trimerize; 6 large subunits form a core ring with 6 small subunits projecting outwards. The cofactor is adenosylcob(III)alamin.

It is found in the bacterial microcompartment. The catalysed reaction is ethanolamine = acetaldehyde + NH4(+). It participates in amine and polyamine degradation; ethanolamine degradation. In terms of biological role, catalyzes the deamination of various vicinal amino-alcohols to oxo compounds. Allows this organism to utilize ethanolamine as the sole source of nitrogen and carbon in the presence of external vitamin B12. This is Ethanolamine ammonia-lyase small subunit from Salmonella heidelberg (strain SL476).